We begin with the raw amino-acid sequence, 304 residues long: Killer cell immunoglobulin-like receptor 2DS1 (304 aa).

The N-terminal stretch at 1–21 (MSLTVVSMACVGFFLLQGAWP) is a signal peptide. Over 22–245 (HEGVHRKPSL…SETGNPRHLH (224 aa)) the chain is Extracellular. 2 consecutive Ig-like C2-type domains span residues 42–107 (EETV…VTHS) and 142–205 (GENV…FRDS). Residues Cys49 and Cys100 are joined by a disulfide bond. N-linked (GlcNAc...) asparagine glycosylation is found at Asn67, Asn84, Asn144, and Asn178. A disulfide bridge connects residues Cys149 and Cys198. The tract at residues 220-239 (VTGNPSNSWPSPTEPSSETG) is disordered. The span at 223 to 239 (NPSNSWPSPTEPSSETG) shows a compositional bias: low complexity. A helical transmembrane segment spans residues 246-264 (VLIGTSVVKIPFTILLFFL). Residues 265-304 (LHRWCSDKKNAAVMDQEPAGNRTVNSEDSDEQDHQEVSYA) lie on the Cytoplasmic side of the membrane. The segment at 280–304 (QEPAGNRTVNSEDSDEQDHQEVSYA) is disordered.

This sequence belongs to the immunoglobulin superfamily. As to quaternary structure, interacts with the adapter protein TYROBP/DAP12; the interaction enhances KIR2DS1 stability at the cell surface. Expressed by NK cells.

It localises to the cell membrane. In terms of biological role, receptor on natural killer (NK) cells for some HLA-C alleles such as w6. Does not inhibit the activity of NK cells. In Homo sapiens (Human), this protein is Killer cell immunoglobulin-like receptor 2DS1.